The chain runs to 512 residues: 2,3-bisphosphoglycerate-independent phosphoglycerate mutase (512 aa).

Residues D11 and S61 each contribute to the Mn(2+) site. The Phosphoserine intermediate role is filled by S61. Residues H122, 152-153 (RD), R184, R190, 259-262 (RADR), and K332 each bind substrate. 5 residues coordinate Mn(2+): D399, H403, D440, H441, and H459.

Belongs to the BPG-independent phosphoglycerate mutase family. In terms of assembly, monomer. Mn(2+) is required as a cofactor.

It carries out the reaction (2R)-2-phosphoglycerate = (2R)-3-phosphoglycerate. It functions in the pathway carbohydrate degradation; glycolysis; pyruvate from D-glyceraldehyde 3-phosphate: step 3/5. Its function is as follows. Catalyzes the interconversion of 2-phosphoglycerate and 3-phosphoglycerate. In Francisella philomiragia subsp. philomiragia (strain ATCC 25017 / CCUG 19701 / FSC 153 / O#319-036), this protein is 2,3-bisphosphoglycerate-independent phosphoglycerate mutase.